Reading from the N-terminus, the 146-residue chain is Large ribosomal subunit protein uL15 (146 aa).

Basic and acidic residues predominate over residues 1-13 (MKLHELKPAEGSR). The tract at residues 1–56 (MKLHELKPAEGSRKVRNRVGRGAATGNGKTSGRGQKGQKARSGGSVRPGFEGGQLP) is disordered. The segment covering 23 to 35 (AATGNGKTSGRGQ) has biased composition (gly residues).

The protein belongs to the universal ribosomal protein uL15 family. Part of the 50S ribosomal subunit.

In terms of biological role, binds to the 23S rRNA. The protein is Large ribosomal subunit protein uL15 of Staphylococcus saprophyticus subsp. saprophyticus (strain ATCC 15305 / DSM 20229 / NCIMB 8711 / NCTC 7292 / S-41).